The sequence spans 333 residues: Fructose-1,6-bisphosphatase class 1 (333 aa).

Residues Glu92, Asp113, Leu115, and Asp116 each coordinate Mg(2+). Substrate contacts are provided by residues 116 to 119, Asn209, Tyr242, and Lys272; that span reads DGSS. Glu278 is a binding site for Mg(2+).

Belongs to the FBPase class 1 family. As to quaternary structure, homotetramer. It depends on Mg(2+) as a cofactor.

It localises to the cytoplasm. It carries out the reaction beta-D-fructose 1,6-bisphosphate + H2O = beta-D-fructose 6-phosphate + phosphate. It functions in the pathway carbohydrate biosynthesis; Calvin cycle. This Chlorobaculum parvum (strain DSM 263 / NCIMB 8327) (Chlorobium vibrioforme subsp. thiosulfatophilum) protein is Fructose-1,6-bisphosphatase class 1.